We begin with the raw amino-acid sequence, 140 residues long: Small ribosomal subunit protein bS6 (140 aa).

A disordered region spans residues 111 to 140 (EHFTGPAGAEGSDDESTESTDEAVAETADA). A compositionally biased stretch (acidic residues) spans 121–140 (GSDDESTESTDEAVAETADA).

This sequence belongs to the bacterial ribosomal protein bS6 family.

Functionally, binds together with bS18 to 16S ribosomal RNA. This chain is Small ribosomal subunit protein bS6, found in Rhodopirellula baltica (strain DSM 10527 / NCIMB 13988 / SH1).